The chain runs to 334 residues: Terpene synthase 1 (334 aa).

Residues Asp82 and Asp86 each coordinate Mg(2+). Positions Asp82 to Asp86 match the D(D/E)XX(D/E) motif motif. Arg184 is a binding site for substrate. Mg(2+)-binding residues include Asn230, Ser234, and Glu238. The NSE motif signature appears at Asn230–Glu238. Positions Trp309–Tyr316 match the WxxxxxRY motif motif.

This sequence belongs to the terpene synthase family. Mg(2+) is required as a cofactor.

It carries out the reaction (2E,6E)-farnesyl diphosphate = gamma-muurolene + diphosphate. The catalysed reaction is (2E,6E)-farnesyl diphosphate = alpha-muurolene + diphosphate. It catalyses the reaction (2E,6E)-farnesyl diphosphate = (-)-(E)-beta-caryophyllene + diphosphate. The enzyme catalyses (2E)-geranyl diphosphate = beta-myrcene + diphosphate. Terpene synthase that catalyzes the cyclization of farnesyl diphosphate (FPP) into a mixture of sesquiterpenes with gamma-muurolene as the most abundant compound and (-)-beta-caryophyllene, alpha-muurolene, and 4 unidentified sesquiterpenes as minor compoundss. TPS1 also shows monoterpene synthase activity and can also use geranyl diphosphate (GPP) as a substrate to convert it into a mixture of cyclic and acyclic monoterpenes, including myrcene and linalool. P.polycephalum has a unique biology and these volatile terpenoids could function in internal communication of P.polycephalum, to mark the territory that have been explored, or they may be involved in chemotaxis. The protein is Terpene synthase 1 of Physarum polycephalum (Slime mold).